Consider the following 52-residue polypeptide: Conotoxin Cal6.3b (52 aa).

Residues 1–4 constitute a propeptide that is removed on maturation; it reads KKKR. Disulfide bonds link cysteine 12-cysteine 23, cysteine 15-cysteine 27, and cysteine 22-cysteine 30. Position 50 is a glutamine amide (glutamine 50).

Expressed by the venom duct.

The protein resides in the secreted. Probable neurotoxin with unknown target. Possibly targets ion channels. The protein is Conotoxin Cal6.3b of Californiconus californicus (California cone).